We begin with the raw amino-acid sequence, 349 residues long: Hydroxymethylglutaryl-CoA synthase (349 aa).

(3S)-3-hydroxy-3-methylglutaryl-CoA is bound by residues Asp29 and Ala30. Catalysis depends on Glu81, which acts as the Proton donor/acceptor. Residues Cys113 and Thr154 each contribute to the (3S)-3-hydroxy-3-methylglutaryl-CoA site. Cys113 acts as the Acyl-thioester intermediate in catalysis. Residue Arg202 participates in CoA binding. The (3S)-3-hydroxy-3-methylglutaryl-CoA site is built by Thr204 and His237. Catalysis depends on His237, which acts as the Proton donor/acceptor. Residue Lys242 coordinates CoA. The (3S)-3-hydroxy-3-methylglutaryl-CoA site is built by Arg246, Asn269, and Ser299.

Belongs to the thiolase-like superfamily. Archaeal HMG-CoA synthase family. As to quaternary structure, interacts with acetoacetyl-CoA thiolase that catalyzes the precedent step in the pathway and with a DUF35 protein. The acetoacetyl-CoA thiolase/HMG-CoA synthase complex channels the intermediate via a fused CoA-binding site, which allows for efficient coupling of the endergonic thiolase reaction with the exergonic HMGCS reaction.

It carries out the reaction acetoacetyl-CoA + acetyl-CoA + H2O = (3S)-3-hydroxy-3-methylglutaryl-CoA + CoA + H(+). Its pathway is metabolic intermediate biosynthesis; (R)-mevalonate biosynthesis; (R)-mevalonate from acetyl-CoA: step 2/3. In terms of biological role, catalyzes the condensation of acetyl-CoA with acetoacetyl-CoA to form 3-hydroxy-3-methylglutaryl-CoA (HMG-CoA). Functions in the mevalonate (MVA) pathway leading to isopentenyl diphosphate (IPP), a key precursor for the biosynthesis of isoprenoid compounds that are building blocks of archaeal membrane lipids. This chain is Hydroxymethylglutaryl-CoA synthase, found in Methanococcoides burtonii (strain DSM 6242 / NBRC 107633 / OCM 468 / ACE-M).